The chain runs to 154 residues: Myoglobin (154 aa).

In terms of domain architecture, Globin spans glycine 2–lysine 148. Residue serine 4 is modified to Phosphoserine. Residue histidine 65 coordinates nitrite. Residue histidine 65 participates in O2 binding. Position 68 is a phosphothreonine (threonine 68). Histidine 94 contributes to the heme b binding site.

It belongs to the globin family. As to quaternary structure, monomeric.

Its subcellular location is the cytoplasm. The protein resides in the sarcoplasm. It catalyses the reaction Fe(III)-heme b-[protein] + nitric oxide + H2O = Fe(II)-heme b-[protein] + nitrite + 2 H(+). The enzyme catalyses H2O2 + AH2 = A + 2 H2O. Functionally, monomeric heme protein which primary function is to store oxygen and facilitate its diffusion within muscle tissues. Reversibly binds oxygen through a pentacoordinated heme iron and enables its timely and efficient release as needed during periods of heightened demand. Depending on the oxidative conditions of tissues and cells, and in addition to its ability to bind oxygen, it also has a nitrite reductase activity whereby it regulates the production of bioactive nitric oxide. Under stress conditions, like hypoxia and anoxia, it also protects cells against reactive oxygen species thanks to its pseudoperoxidase activity. This is Myoglobin (MB) from Nycticebus coucang (Slow loris).